The sequence spans 321 residues: Aspartate carbamoyltransferase catalytic subunit (321 aa).

R70 and T71 together coordinate carbamoyl phosphate. K98 contacts L-aspartate. The carbamoyl phosphate site is built by R120, H148, and Q151. L-aspartate-binding residues include R181 and R235. Carbamoyl phosphate contacts are provided by G276 and P277.

This sequence belongs to the aspartate/ornithine carbamoyltransferase superfamily. ATCase family. In terms of assembly, heterododecamer (2C3:3R2) of six catalytic PyrB chains organized as two trimers (C3), and six regulatory PyrI chains organized as three dimers (R2).

The enzyme catalyses carbamoyl phosphate + L-aspartate = N-carbamoyl-L-aspartate + phosphate + H(+). It participates in pyrimidine metabolism; UMP biosynthesis via de novo pathway; (S)-dihydroorotate from bicarbonate: step 2/3. Its function is as follows. Catalyzes the condensation of carbamoyl phosphate and aspartate to form carbamoyl aspartate and inorganic phosphate, the committed step in the de novo pyrimidine nucleotide biosynthesis pathway. In Gluconacetobacter diazotrophicus (strain ATCC 49037 / DSM 5601 / CCUG 37298 / CIP 103539 / LMG 7603 / PAl5), this protein is Aspartate carbamoyltransferase catalytic subunit.